We begin with the raw amino-acid sequence, 237 residues long: B3 domain-containing protein Os03g0184500 (237 aa).

The segment at residues Phe-137 to Thr-228 is a DNA-binding region (TF-B3).

The protein resides in the nucleus. The polypeptide is B3 domain-containing protein Os03g0184500 (Oryza sativa subsp. japonica (Rice)).